Reading from the N-terminus, the 89-residue chain is MMNDNNERKPLRTIKGLVISNKMQKTVTVLVERQIKHALYGKYIKRSTKLHAHDADDLCNEGDVVLMTEVAPISKTKNWRVVEIVARSD.

This sequence belongs to the universal ribosomal protein uS17 family. Part of the 30S ribosomal subunit.

One of the primary rRNA binding proteins, it binds specifically to the 5'-end of 16S ribosomal RNA. This is Small ribosomal subunit protein uS17 from Xylella fastidiosa (strain Temecula1 / ATCC 700964).